The primary structure comprises 106 residues: Large ribosomal subunit protein eL42 (106 aa).

It belongs to the eukaryotic ribosomal protein eL42 family.

The polypeptide is Large ribosomal subunit protein eL42 (RPL44) (Wickerhamomyces ciferrii (strain ATCC 14091 / BCRC 22168 / CBS 111 / JCM 3599 / NBRC 0793 / NRRL Y-1031 F-60-10) (Yeast)).